Consider the following 329-residue polypeptide: Glycerol-3-phosphate dehydrogenase [NAD(P)+] (329 aa).

W15, H35, and K107 together coordinate NADPH. K107, G135, and S137 together coordinate sn-glycerol 3-phosphate. A139 lines the NADPH pocket. Sn-glycerol 3-phosphate contacts are provided by K190, D243, S253, R254, and N255. The Proton acceptor role is filled by K190. Position 254 (R254) interacts with NADPH. Positions 276 and 278 each coordinate NADPH.

The protein belongs to the NAD-dependent glycerol-3-phosphate dehydrogenase family.

It is found in the cytoplasm. The catalysed reaction is sn-glycerol 3-phosphate + NAD(+) = dihydroxyacetone phosphate + NADH + H(+). It carries out the reaction sn-glycerol 3-phosphate + NADP(+) = dihydroxyacetone phosphate + NADPH + H(+). The protein operates within membrane lipid metabolism; glycerophospholipid metabolism. Its function is as follows. Catalyzes the reduction of the glycolytic intermediate dihydroxyacetone phosphate (DHAP) to sn-glycerol 3-phosphate (G3P), the key precursor for phospholipid synthesis. The polypeptide is Glycerol-3-phosphate dehydrogenase [NAD(P)+] (Rhodopseudomonas palustris (strain TIE-1)).